Here is a 431-residue protein sequence, read N- to C-terminus: Enolase (431 aa).

A disordered region spans residues 27–47 (LESGHSGRAAVPSGASTGSRE). Gln-163 contacts (2R)-2-phosphoglycerate. The active-site Proton donor is the Glu-205. Positions 242, 285, and 312 each coordinate Mg(2+). The (2R)-2-phosphoglycerate site is built by Lys-337, Arg-366, Ser-367, and Lys-388. The active-site Proton acceptor is the Lys-337.

Belongs to the enolase family. Mg(2+) serves as cofactor.

It is found in the cytoplasm. The protein localises to the secreted. The protein resides in the cell surface. It catalyses the reaction (2R)-2-phosphoglycerate = phosphoenolpyruvate + H2O. Its pathway is carbohydrate degradation; glycolysis; pyruvate from D-glyceraldehyde 3-phosphate: step 4/5. Catalyzes the reversible conversion of 2-phosphoglycerate (2-PG) into phosphoenolpyruvate (PEP). It is essential for the degradation of carbohydrates via glycolysis. The protein is Enolase of Oleidesulfovibrio alaskensis (strain ATCC BAA-1058 / DSM 17464 / G20) (Desulfovibrio alaskensis).